We begin with the raw amino-acid sequence, 354 residues long: 3'-5' exonuclease (354 aa).

Positions 1 to 120 are disordered; that stretch reads MEKYLIKMPI…PSPEKEKPEK (120 aa). Basic and acidic residues-rich tracts occupy residues 13–23, 36–50, and 71–91; these read KASEVPKDKAV, TKNDTPKELKNKENA, and KNLDTPETKAEKIATEEENPP. A phosphoserine mark is found at S104, S110, and S112. The 169-residue stretch at 146-314 folds into the 3'-5' exonuclease domain; sequence VLQWVEKQKD…GQVIYRELER (169 aa). Residues D163, E165, and D301 each coordinate Mg(2+).

It belongs to the WRNexo family.

It localises to the nucleus. Its function is as follows. Has exonuclease activity on both single-stranded and duplex templates bearing overhangs, but not blunt ended duplex DNA, and cleaves in a 3'-5' direction. Essential for the formation of DNA replication focal centers. Has an important role in maintaining genome stability. This is 3'-5' exonuclease from Drosophila erecta (Fruit fly).